Reading from the N-terminus, the 180-residue chain is Large ribosomal subunit protein uL16 (180 aa).

It belongs to the universal ribosomal protein uL16 family.

The chain is Large ribosomal subunit protein uL16 from Pyrobaculum aerophilum (strain ATCC 51768 / DSM 7523 / JCM 9630 / CIP 104966 / NBRC 100827 / IM2).